Here is a 414-residue protein sequence, read N- to C-terminus: Tryptophan synthase beta chain (414 aa).

Residues 1 to 28 (MVSTISRQDQNNNDDLNQPSKEGRFGKY) form a disordered region. The segment covering 8-18 (QDQNNNDDLNQ) has biased composition (low complexity). Residue K108 is modified to N6-(pyridoxal phosphate)lysine.

This sequence belongs to the TrpB family. Tetramer of two alpha and two beta chains. Pyridoxal 5'-phosphate serves as cofactor.

The catalysed reaction is (1S,2R)-1-C-(indol-3-yl)glycerol 3-phosphate + L-serine = D-glyceraldehyde 3-phosphate + L-tryptophan + H2O. The protein operates within amino-acid biosynthesis; L-tryptophan biosynthesis; L-tryptophan from chorismate: step 5/5. In terms of biological role, the beta subunit is responsible for the synthesis of L-tryptophan from indole and L-serine. In Prochlorococcus marinus subsp. pastoris (strain CCMP1986 / NIES-2087 / MED4), this protein is Tryptophan synthase beta chain.